The following is a 77-amino-acid chain: U14-theraphotoxin-Cg1a 2 (77 aa).

A signal peptide spans 1 to 21; sequence MKTSVLLVILGIAAITVQCTA. A propeptide spanning residues 22-49 is cleaved from the precursor; it reads SESVKQDSLRTFVDAVLGWNAEMASEAR. 3 disulfides stabilise this stretch: Cys50–Cys64, Cys57–Cys69, and Cys63–Cys75. Lys77 carries the post-translational modification Lysine amide.

It belongs to the neurotoxin 10 (Hwtx-1) family. 65 (Jztx-21) subfamily. In terms of tissue distribution, expressed by the venom gland.

It is found in the secreted. In terms of biological role, probable ion channel inhibitor. The polypeptide is U14-theraphotoxin-Cg1a 2 (Chilobrachys guangxiensis (Chinese earth tiger tarantula)).